The chain runs to 245 residues: Dehydrogenase/reductase SDR family member 6 (245 aa).

NAD(+)-binding positions include Gln16–Ile18, Asp37, and Asp58. A substrate-binding site is contributed by Arg144. Tyr147 acts as the Proton acceptor in catalysis. Residues Lys151 and Val180–Ser184 each bind NAD(+). Positions 188 and 205 each coordinate substrate.

It belongs to the short-chain dehydrogenases/reductases (SDR) family. As to quaternary structure, homotetramer.

It is found in the cytoplasm. The enzyme catalyses cis-4-hydroxy-L-proline + NAD(+) = 4-oxo-L-proline + NADH + H(+). The catalysed reaction is (R)-3-hydroxybutanoate + NAD(+) = acetoacetate + NADH + H(+). It participates in amino-acid metabolism. Its pathway is siderophore biosynthesis. Its function is as follows. NAD(H)-dependent dehydrogenase/reductase with a preference for cyclic substrates. Catalyzes stereoselective conversion of 4-oxo-L-proline to cis-4-hydroxy-L-proline, likely a detoxification mechanism for ketoprolines. Mediates the formation of 2,5-dihydroxybenzoate (2,5-DHBA), a siderophore that chelates free cytoplasmic iron, thereby regulating iron transport and homeostasis while protecting cells against free radical-induced oxidative stress. The iron-siderophore complex is imported into mitochondria, providing an iron source for mitochondrial metabolic processes in particular heme synthesis. May act as a 3-hydroxybutyrate dehydrogenase. The protein is Dehydrogenase/reductase SDR family member 6 (bdh2) of Danio rerio (Zebrafish).